The primary structure comprises 608 residues: Dolichyl-diphosphooligosaccharide--protein glycosyltransferase subunit 1 (608 aa).

A signal peptide spans 1 to 24 (MEAPAVCLLPLLLLLWAWAPAPGR). Topologically, residues 25–435 (ASPEALPLVN…VVHYTFNKVL (411 aa)) are lumenal. An N6-acetyllysine modification is found at lysine 188. An N-linked (GlcNAc...) asparagine glycan is attached at asparagine 300. The helical transmembrane segment at 436–456 (MLQEPLLVVAAFYILFFTVIV) threads the bilayer. At 457–607 (YVRLDFSITK…VTKIDHILDA (151 aa)) the chain is on the cytoplasmic side. Position 539 is an N6-acetyllysine; alternate (lysine 539). Lysine 539 participates in a covalent cross-link: Glycyl lysine isopeptide (Lys-Gly) (interchain with G-Cter in SUMO2); alternate.

It belongs to the OST1 family. Component of the oligosaccharyltransferase (OST) complex. OST exists in two different complex forms which contain common core subunits RPN1, RPN2, OST48, OST4, DAD1 and TMEM258, either STT3A or STT3B as catalytic subunits, and form-specific accessory subunits. STT3A complex assembly occurs through the formation of 3 subcomplexes. Subcomplex 1 contains RPN1 and TMEM258, subcomplex 2 contains the STT3A-specific subunits STT3A, DC2/OSTC, and KCP2 as well as the core subunit OST4, and subcomplex 3 contains RPN2, DAD1, and OST48. The STT3A complex can form stable complexes with the Sec61 complex or with both the Sec61 and TRAP complexes. Interacts with TMEM35A/NACHO. Post-translationally, ubiquitinated by the ECS(ASB11) complex. In terms of processing, ufmylated by UFL1 in response to endoplasmic reticulum stress, promoting reticulophagy of endoplasmic reticulum sheets. As to expression, detected in liver (at protein level).

It is found in the endoplasmic reticulum membrane. It functions in the pathway protein modification; protein glycosylation. Its function is as follows. Subunit of the oligosaccharyl transferase (OST) complex that catalyzes the initial transfer of a defined glycan (Glc(3)Man(9)GlcNAc(2) in eukaryotes) from the lipid carrier dolichol-pyrophosphate to an asparagine residue within an Asn-X-Ser/Thr consensus motif in nascent polypeptide chains, the first step in protein N-glycosylation. N-glycosylation occurs cotranslationally and the complex associates with the Sec61 complex at the channel-forming translocon complex that mediates protein translocation across the endoplasmic reticulum (ER). All subunits are required for a maximal enzyme activity. In Sus scrofa (Pig), this protein is Dolichyl-diphosphooligosaccharide--protein glycosyltransferase subunit 1.